The sequence spans 605 residues: Replication protein E1 (605 aa).

The Nuclear localization signal motif lies at 84-86 (KRK). 2 positions are modified to phosphoserine; by host: S90 and S94. The span at 90 to 101 (SSQNSSGSEASE) shows a compositional bias: low complexity. The segment at 90-112 (SSQNSSGSEASETPVKRRKSGAK) is disordered. Residue T102 is modified to Phosphothreonine; by host CDK1. The short motif at 105-108 (KRRK) is the Nuclear localization signal element. S109 carries the post-translational modification Phosphoserine; by host. Residues 142–308 (EEQAISHLHL…QTTLNESLQT (167 aa)) form a DNA-binding region region. The 151-residue stretch at 407–557 (IELITFINAL…CTDESGEQPF (151 aa)) folds into the SF3 helicase domain. 433–440 (GPPNTGKS) lines the ATP pocket. K514 is covalently cross-linked (Glycyl lysine isopeptide (Lys-Gly) (interchain with G-Cter in SUMO)). Residues 582-605 (EDSEEDGDSMRTFTCSARNTNAVD) form a disordered region. Residues 592–605 (RTFTCSARNTNAVD) are compositionally biased toward polar residues.

It belongs to the papillomaviridae E1 protein family. As to quaternary structure, can form hexamers. Interacts with E2 protein; this interaction increases E1 DNA binding specificity. Interacts with host DNA polymerase subunit POLA2. Interacts with host single stranded DNA-binding protein RPA1. Interacts with host TOP1; this interaction stimulates the enzymatic activity of TOP1. In terms of processing, phosphorylated. Probably phosphorylated by host PKA and PKC at Ser-109. Phosphorylated by host CDK1 at Thr-102. Phosphorylated. Post-translationally, sumoylated.

The protein localises to the host nucleus. The enzyme catalyses Couples ATP hydrolysis with the unwinding of duplex DNA by translocating in the 3'-5' direction.. It carries out the reaction ATP + H2O = ADP + phosphate + H(+). Its function is as follows. ATP-dependent DNA 3'-5' helicase required for initiation of viral DNA replication. It forms a complex with the viral E2 protein. The E1-E2 complex binds to the replication origin which contains binding sites for both proteins. During the initial step, a dimer of E1 interacts with a dimer of protein E2 leading to a complex that binds the viral origin of replication with high specificity. Then, a second dimer of E1 displaces the E2 dimer in an ATP-dependent manner to form the E1 tetramer. Following this, two E1 monomers are added to each half of the site, which results in the formation of two E1 trimers on the viral ori. Subsequently, two hexamers will be created. The double hexamer acts as a bi-directional helicase machinery and unwinds the viral DNA and then recruits the host DNA polymerase to start replication. The chain is Replication protein E1 from Bovine papillomavirus type 1.